Here is a 242-residue protein sequence, read N- to C-terminus: Adenosine 5'-phosphosulfate reductase (242 aa).

4 residues coordinate [4Fe-4S] cluster: Cys-125, Cys-126, Cys-208, and Cys-211. Cys-234 (nucleophile; cysteine thiosulfonate intermediate) is an active-site residue.

Belongs to the PAPS reductase family. CysH subfamily. Requires [4Fe-4S] cluster as cofactor.

It localises to the cytoplasm. The catalysed reaction is [thioredoxin]-disulfide + sulfite + AMP + 2 H(+) = adenosine 5'-phosphosulfate + [thioredoxin]-dithiol. It participates in sulfur metabolism; hydrogen sulfide biosynthesis; sulfite from sulfate. Catalyzes the formation of sulfite from adenosine 5'-phosphosulfate (APS) using thioredoxin as an electron donor. This is Adenosine 5'-phosphosulfate reductase from Staphylococcus saprophyticus subsp. saprophyticus (strain ATCC 15305 / DSM 20229 / NCIMB 8711 / NCTC 7292 / S-41).